Consider the following 295-residue polypeptide: Zygote arrest protein 1.S (295 aa).

Disordered stretches follow at residues 80–115 (SVQC…TKTV) and 144–186 (EKGE…APAQ). Positions 144 to 176 (EKGEAVRSEGSEGGRQEGKQGDGEIKEQMKMDK) are enriched in basic and acidic residues. The 3CxxC-type zinc-finger motif lies at 197–280 (KYGYYHCKDC…RQDLCGRCKG (84 aa)).

Belongs to the ZAR1 family. In terms of tissue distribution, ovary. Also expressed in lung and muscle.

It is found in the cytoplasm. It localises to the cytoplasmic ribonucleoprotein granule. Functionally, mRNA-binding protein required for maternal mRNA storage, translation and degradation during oocyte maturation. Probably promotes formation of some phase-separated membraneless compartment that stores maternal mRNAs in oocytes: acts by undergoing liquid-liquid phase separation upon binding to maternal mRNAs. Binds to the 3'-UTR of maternal mRNAs in immature oocytes, inhibiting their translation. The sequence is that of Zygote arrest protein 1.S (zar1.S) from Xenopus laevis (African clawed frog).